Here is a 676-residue protein sequence, read N- to C-terminus: Electrogenic aspartate/glutamate antiporter SLC25A12, mitochondrial (676 aa).

At Ala2 the chain carries N-acetylalanine. The segment at Ala2–Pro293 is regulatory N-terminal domain. The Mitochondrial intermembrane portion of the chain corresponds to Ala2 to Arg328. Ca(2+) is bound by residues Asp65, Thr67, Asp69, Leu71, and Glu76. EF-hand domains lie at Asp65–Glu76, Ala86–His121, Pro125–Gln155, and Leu157–His192. The tract at residues Leu294–Gln309 is linker loop domain. The interval Trp319–Leu611 is carrier domain. Solcar repeat units lie at residues Ala323–Lys415, Ile423–Leu507, and Val515–Trp603. The helical transmembrane segment at Phe329 to Ile346 threads the bilayer. The Mitochondrial matrix segment spans residues Asp347–Arg389. A helical transmembrane segment spans residues Gly390–Asn409. At Asp410–Gly432 the chain is on the mitochondrial intermembrane side. Residues Gly433–Leu446 form a helical membrane-spanning segment. Residues Glu447–Lys481 are Mitochondrial matrix-facing. Residues Gly482–Tyr501 form a helical membrane-spanning segment. At Ala502–Leu520 the chain is on the mitochondrial intermembrane side. A helical membrane pass occupies residues Leu521–Ala538. At Asp539 to Lys577 the chain is on the mitochondrial matrix side. The helical transmembrane segment at Gly578 to Tyr597 threads the bilayer. Residues Glu598 to Gln676 are Mitochondrial intermembrane-facing. The tract at residues Lys612 to Ala674 is C-terminal domain.

The protein belongs to the mitochondrial carrier (TC 2.A.29) family. Homodimer (via N-terminus).

The protein localises to the mitochondrion inner membrane. It catalyses the reaction L-aspartate(in) + L-glutamate(out) + H(+)(out) = L-aspartate(out) + L-glutamate(in) + H(+)(in). It carries out the reaction 3-sulfino-L-alanine(out) + L-glutamate(in) + H(+)(in) = 3-sulfino-L-alanine(in) + L-glutamate(out) + H(+)(out). The enzyme catalyses 3-sulfino-L-alanine(out) + L-aspartate(in) = 3-sulfino-L-alanine(in) + L-aspartate(out). L-aspartate and 3-sulfino-L-alanine uptake are both inhibited by glisoxepide. Its function is as follows. Mitochondrial electrogenic aspartate/glutamate antiporter that favors efflux of aspartate and entry of glutamate and proton within the mitochondria as part of the malate-aspartate shuttle. Also mediates the uptake of L-cysteinesulfinate (3-sulfino-L-alanine) by mitochondria in exchange of L-glutamate and proton. Can also exchange L-cysteinesulfinate with aspartate in their anionic form without any proton translocation. Lacks transport activity towards L-glutamine or gamma-aminobutyric acid (GABA). This is Electrogenic aspartate/glutamate antiporter SLC25A12, mitochondrial from Rattus norvegicus (Rat).